A 195-amino-acid chain; its full sequence is NADH-quinone oxidoreductase subunit I (195 aa).

4Fe-4S ferredoxin-type domains follow at residues 44–74 (LNRY…VEGA) and 90–119 (QVYQ…MTNE). [4Fe-4S] cluster-binding residues include Cys54, Cys57, Cys60, Cys64, Cys99, Cys102, Cys105, and Cys109. Positions 145-195 (MTAPPHALRPGTTQDDYYRGDITAVPEQAAPEQAAPEQPAPEREPNPETEK) are disordered. Residues 168–181 (AVPEQAAPEQAAPE) are compositionally biased toward low complexity. Basic and acidic residues predominate over residues 184–195 (APEREPNPETEK).

This sequence belongs to the complex I 23 kDa subunit family. In terms of assembly, NDH-1 is composed of 14 different subunits. Subunits NuoA, H, J, K, L, M, N constitute the membrane sector of the complex. Requires [4Fe-4S] cluster as cofactor.

The protein localises to the cell membrane. It carries out the reaction a quinone + NADH + 5 H(+)(in) = a quinol + NAD(+) + 4 H(+)(out). Functionally, NDH-1 shuttles electrons from NADH, via FMN and iron-sulfur (Fe-S) centers, to quinones in the respiratory chain. The immediate electron acceptor for the enzyme in this species is believed to be ubiquinone. Couples the redox reaction to proton translocation (for every two electrons transferred, four hydrogen ions are translocated across the cytoplasmic membrane), and thus conserves the redox energy in a proton gradient. This is NADH-quinone oxidoreductase subunit I from Rhodococcus erythropolis (strain PR4 / NBRC 100887).